The sequence spans 125 residues: Holo-[acyl-carrier-protein] synthase (125 aa).

Residues Asp-8 and Glu-60 each coordinate Mg(2+).

It belongs to the P-Pant transferase superfamily. AcpS family. Mg(2+) is required as a cofactor.

It localises to the cytoplasm. The enzyme catalyses apo-[ACP] + CoA = holo-[ACP] + adenosine 3',5'-bisphosphate + H(+). Transfers the 4'-phosphopantetheine moiety from coenzyme A to a Ser of acyl-carrier-protein. The polypeptide is Holo-[acyl-carrier-protein] synthase (Wolbachia sp. subsp. Brugia malayi (strain TRS)).